Here is a 202-residue protein sequence, read N- to C-terminus: Small ribosomal subunit protein uS4c (202 aa).

Residues 90-158 (MRSDNVIFRL…ISKNIELYQK (69 aa)) form the S4 RNA-binding domain.

This sequence belongs to the universal ribosomal protein uS4 family. Part of the 30S ribosomal subunit. Contacts protein S5. The interaction surface between S4 and S5 is involved in control of translational fidelity.

The protein localises to the plastid. The protein resides in the chloroplast. Its function is as follows. One of the primary rRNA binding proteins, it binds directly to 16S rRNA where it nucleates assembly of the body of the 30S subunit. In terms of biological role, with S5 and S12 plays an important role in translational accuracy. This chain is Small ribosomal subunit protein uS4c (rps4), found in Exsertotheca crispa (Moss).